The primary structure comprises 261 residues: Indole-3-glycerol phosphate synthase (261 aa).

This sequence belongs to the TrpC family.

The catalysed reaction is 1-(2-carboxyphenylamino)-1-deoxy-D-ribulose 5-phosphate + H(+) = (1S,2R)-1-C-(indol-3-yl)glycerol 3-phosphate + CO2 + H2O. It participates in amino-acid biosynthesis; L-tryptophan biosynthesis; L-tryptophan from chorismate: step 4/5. This Burkholderia vietnamiensis (strain G4 / LMG 22486) (Burkholderia cepacia (strain R1808)) protein is Indole-3-glycerol phosphate synthase.